We begin with the raw amino-acid sequence, 228 residues long: Core-capsid bridging protein (228 aa).

Residues 146 to 177 (ARPPAARISPPRRRRRRRRSPRPRATAAYRSS) are disordered. Over residues 155–167 (PPRRRRRRRRSPR) the composition is skewed to basic residues. The span at 168-177 (PRATAAYRSS) shows a compositional bias: low complexity.

The protein belongs to the adenoviridae core-capsid bridging protein family. Monomer. Homodimer. Exists in equilibrium between monomers and dimers in solution. Interacts with the histone-like nucleoprotein; this interactions bridge the virus core to the capsid. Interacts with core protein X; this interactions bridge the virus core to the capsid. Interacts with the endosome lysis protein VI; this interactions bridge the virus core to the capsid. Interacts with the peripentonal hexons. Interacts with host NPM1; this interaction might play a role in virus assembly.

The protein localises to the virion. Its subcellular location is the host nucleus. The protein resides in the host nucleolus. Its function is as follows. Associates loosely with the viral DNA to form an outer shell around the nucleoprotein-DNA complex and links it with the capsid by binding the endosome lysis protein. Dissociates from the viral genome during entry. Might be involved in nuclear capsid assembly of the viral particles through its association with NPM1/nucleophosmin. The polypeptide is Core-capsid bridging protein (Murine adenovirus A serotype 1 (MAdV-1)).